Consider the following 131-residue polypeptide: Holo-[acyl-carrier-protein] synthase (131 aa).

Mg(2+) contacts are provided by D8 and E59.

Belongs to the P-Pant transferase superfamily. AcpS family. Requires Mg(2+) as cofactor.

The protein localises to the cytoplasm. The catalysed reaction is apo-[ACP] + CoA = holo-[ACP] + adenosine 3',5'-bisphosphate + H(+). Functionally, transfers the 4'-phosphopantetheine moiety from coenzyme A to a Ser of acyl-carrier-protein. The protein is Holo-[acyl-carrier-protein] synthase of Rickettsia felis (strain ATCC VR-1525 / URRWXCal2) (Rickettsia azadi).